The primary structure comprises 350 residues: tRNA uridine(34) hydroxylase (350 aa).

Positions 146 to 240 constitute a Rhodanese domain; that stretch reads DDPDALFIDM…YARKAREQGL (95 aa). The active-site Cysteine persulfide intermediate is Cys-200.

The protein belongs to the TrhO family.

The catalysed reaction is uridine(34) in tRNA + AH2 + O2 = 5-hydroxyuridine(34) in tRNA + A + H2O. In terms of biological role, catalyzes oxygen-dependent 5-hydroxyuridine (ho5U) modification at position 34 in tRNAs, the first step in 5-carboxymethoxyuridine (cmo5U) biosynthesis. May be part of an alternate pathway, which is able to bypass cmo5U biogenesis in a subset of tRNAs under aerobic conditions. This is tRNA uridine(34) hydroxylase from Escherichia coli O127:H6 (strain E2348/69 / EPEC).